We begin with the raw amino-acid sequence, 553 residues long: Putative transport protein PM1071 (553 aa).

A run of 5 helical transmembrane segments spans residues 4-24 (IAITISLLALVAVIGLWIGHW), 28-48 (GVGLGIGGVLFGGIIVAHFTN), 65-85 (FGLILFVYTIGIQVGPGFFAS), 91-111 (LKLNGFAALIVLLGSLAVIVI), and 157-177 (MAYAMAYPFGICGILLSMWLI). RCK C-terminal domains lie at 190–276 (KNFL…VLGE) and 277–361 (EVDV…ILGN). 6 helical membrane-spanning segments follow: residues 371-391 (MLPVFIGIGLGVLLGSIPFHI), 403-425 (AGGPLVVALILARIGSIGKLYWF), 439-459 (IVLFLAVVGLKSGGNFVDTLV), 464-484 (LEWMVYGIFITFVPLMIVGIV), 496-516 (LCGLLAGSMTDPPALAFANAI), and 533-553 (LVMFLRIISPQLLAILLWTLL).

This sequence belongs to the AAE transporter (TC 2.A.81) family. YidE subfamily.

The protein resides in the cell membrane. This chain is Putative transport protein PM1071, found in Pasteurella multocida (strain Pm70).